We begin with the raw amino-acid sequence, 514 residues long: L-carnitine/gamma-butyrobetaine antiporter (514 aa).

Topologically, residues 1–11 (MSKDNKKAGIE) are cytoplasmic. A helical transmembrane segment spans residues 12-30 (PKVFFPPLIIVGILCWLTV). The Periplasmic segment spans residues 31 to 42 (RDLDASNEVINA). The helical transmembrane segment at 43-68 (VFSYVTNVWGWAFEWYMVIMFGGWFW) threads the bilayer. Topologically, residues 69–91 (LVFGRYAKKRLGDEKPEFSTASW) are cytoplasmic. A helical membrane pass occupies residues 92–112 (IFMMFASCTSAAVLFWGSIEI). The Periplasmic segment spans residues 113 to 131 (YYYISSPPFGMEGYSAPAK). Residues 132–154 (EIGLAYSLFHWGPLPWATYSFLS) form a helical membrane-spanning segment. Residues 155–185 (VAFAYFFFVRKMEVIRPSSTLTPLVGEKHVN) are Cytoplasmic-facing. A helical membrane pass occupies residues 186–216 (GLFGTVVDNFYLVALILAMGTSLGLATPLVT). The Periplasmic portion of the chain corresponds to 217 to 230 (ECIQYLFGIPHTLQ). The chain crosses the membrane as a helical span at residues 231–249 (LDAIIISCWILLNAICVAF). Residues 250-251 (GL) are Cytoplasmic-facing. Residues 252–277 (QKGVKIASDVRTYLSFLMLGWVFIVG) form a helical membrane-spanning segment. The Periplasmic portion of the chain corresponds to 278-311 (GASFIVNYFTDSVGTLLMYMPRMLFYTDPIGKGG). The helical transmembrane segment at 312–335 (FPQAWTVFYWAWWVIYAIQMSIFL) threads the bilayer. At 336–347 (ARISKGRTVREL) the chain is on the cytoplasmic side. The helical transmembrane segment at 348–369 (CLGMVSGLTAGTWLIWTILGGN) threads the bilayer. Residues 370 to 404 (TLQLIDQNILNIPQLIDQYGVPRAIIETWAALPLS) lie on the Periplasmic side of the membrane. A helical membrane pass occupies residues 405–434 (TATMWGFFILCFIATVTLINACSYTLAMST). The Cytoplasmic portion of the chain corresponds to 435-445 (CRSMKEGAEPP). Residues 446 to 464 (LLVRIGWSVLVGIIGIILL) form a helical membrane-spanning segment. The Periplasmic segment spans residues 465-468 (ALGG). A helical transmembrane segment spans residues 469–492 (LKPIQTAIIAGGCPLFFVNIMVTL). The Cytoplasmic portion of the chain corresponds to 493–514 (SFIKDAKVHWKDCSPYTQKMTH).

This sequence belongs to the BCCT transporter (TC 2.A.15) family. CaiT subfamily. As to quaternary structure, homotrimer.

Its subcellular location is the cell inner membrane. It catalyses the reaction 4-(trimethylamino)butanoate(in) + (R)-carnitine(out) = 4-(trimethylamino)butanoate(out) + (R)-carnitine(in). Its pathway is amine and polyamine metabolism; carnitine metabolism. Catalyzes the exchange of L-carnitine for gamma-butyrobetaine. The sequence is that of L-carnitine/gamma-butyrobetaine antiporter from Proteus mirabilis (strain HI4320).